The sequence spans 425 residues: 5'-deoxyadenosine deaminase (425 aa).

Histidine 62 and histidine 64 together coordinate Zn(2+). 2 residues coordinate substrate: glutamate 91 and histidine 183. Histidine 210 provides a ligand contact to Zn(2+). Residues glutamate 213 and aspartate 298 each coordinate substrate. Aspartate 298 contributes to the Zn(2+) binding site.

This sequence belongs to the metallo-dependent hydrolases superfamily. MTA/SAH deaminase family. In terms of assembly, homotetramer. Requires Zn(2+) as cofactor.

It carries out the reaction 5'-deoxyadenosine + H2O + H(+) = 5'-deoxyinosine + NH4(+). The catalysed reaction is S-adenosyl-L-homocysteine + H2O + H(+) = S-inosyl-L-homocysteine + NH4(+). The enzyme catalyses S-methyl-5'-thioadenosine + H2O + H(+) = S-methyl-5'-thioinosine + NH4(+). It catalyses the reaction adenosine + H2O + H(+) = inosine + NH4(+). The protein operates within amino-acid biosynthesis; S-adenosyl-L-methionine biosynthesis. Catalyzes the deamination of three SAM-derived enzymatic products, namely 5'-deoxyadenosine, S-adenosyl-L-homocysteine, and 5'-methylthioadenosine, to produce the inosine analogs. Can also deaminate adenosine. The preferred substrate for this enzyme is 5'-deoxyadenosine, but all these substrates are efficiently deaminated. Likely functions in a S-adenosyl-L-methionine (SAM) recycling pathway from S-adenosyl-L-homocysteine (SAH) produced from SAM-dependent methylation reactions. May also be involved in the recycling of 5'-deoxyadenosine, whereupon the 5'-deoxyribose moiety of 5'-deoxyinosine is further metabolized to deoxyhexoses used for the biosynthesis of aromatic amino acids in methanogens. This is 5'-deoxyadenosine deaminase from Methanosphaera stadtmanae (strain ATCC 43021 / DSM 3091 / JCM 11832 / MCB-3).